Here is a 288-residue protein sequence, read N- to C-terminus: Pantothenate synthetase (288 aa).

30–37 lines the ATP pocket; the sequence is MGALHEGH. H37 functions as the Proton donor in the catalytic mechanism. Q61 lines the (R)-pantoate pocket. Residue Q61 participates in beta-alanine binding. Residue 147 to 150 coordinates ATP; that stretch reads GEKD. Q153 contributes to the (R)-pantoate binding site. ATP contacts are provided by residues V176 and 184 to 187; that span reads ISSR.

It belongs to the pantothenate synthetase family. In terms of assembly, homodimer.

It is found in the cytoplasm. It carries out the reaction (R)-pantoate + beta-alanine + ATP = (R)-pantothenate + AMP + diphosphate + H(+). It functions in the pathway cofactor biosynthesis; (R)-pantothenate biosynthesis; (R)-pantothenate from (R)-pantoate and beta-alanine: step 1/1. Its function is as follows. Catalyzes the condensation of pantoate with beta-alanine in an ATP-dependent reaction via a pantoyl-adenylate intermediate. This Chlorobium phaeobacteroides (strain BS1) protein is Pantothenate synthetase.